We begin with the raw amino-acid sequence, 108 residues long: Beta-defensin 126 (108 aa).

The signal sequence occupies residues 1 to 20; it reads MKSLLFTLAVFMLLAQLVSG. Residues 21-63 are in vitro binds to LPS, mediates antimicrobial activity and inhibits LPS-mediated inflammation; that stretch reads NWYVKKCLNDVGICKKKCKPGEMHIKNGWATCGKQRDCCVPAD. Disulfide bonds link Cys-27–Cys-58, Cys-34–Cys-52, and Cys-38–Cys-59.

This sequence belongs to the beta-defensin family. As to quaternary structure, homodimer or homooligomer; disulfide-linked. Post-translationally, O-glycosylated; glycans contain alpha(2,3)-linked sialic acids.

It localises to the secreted. Its function is as follows. Highly glycosylated atypical beta-defensin involved in several aspects of sperm function. Facilitates sperm transport in the female reproductive tract and contributes to sperm protection against immunodetection; both functions are probably implicating the negative surface charge provided by its O-linked oligosaccharides in the sperm glycocalyx. Involved in binding of sperm to oviductal epithelial cells to form a sperm reservoir until ovulation. Release from the sperm surface during capacitation and ovaluation by an elevation of oviductal fluid pH is unmasking other surface components and allows sperm to penetrate the cumulus matrix and bind to the zona pellucida of the oocyte. In vitro has antimicrobial activity and may inhibit LPS-mediated inflammation. The polypeptide is Beta-defensin 126 (DEFB126) (Pan troglodytes (Chimpanzee)).